Consider the following 327-residue polypeptide: Glycerol-3-phosphate acyltransferase (327 aa).

The next 5 membrane-spanning stretches (helical) occupy residues 3 to 23 (SLLWLAVAYVMGSIPFGLLFA), 52 to 72 (VGVLTLVCDALKGAIPVAVAL), 78 to 98 (TVFHSLTALAALLGHLYSCFL), 112 to 132 (VFLPLAFWPLVLSGIACLAVI), and 152 to 172 (MLLLGGHWKLVPLALVVMVLV). Disordered regions lie at residues 184 to 212 (SRGEEKPWQKKHHDAAQGTDAGAAPEAAA) and 233 to 327 (PSTE…SSGQ). Over residues 199 to 212 (AQGTDAGAAPEAAA) the composition is skewed to low complexity. Over residues 237–246 (AAPSQETSDA) the composition is skewed to polar residues. Over residues 259-271 (EGDKRENEEHDNA) the composition is skewed to basic and acidic residues.

It belongs to the PlsY family. In terms of assembly, probably interacts with PlsX.

The protein resides in the cell inner membrane. The enzyme catalyses an acyl phosphate + sn-glycerol 3-phosphate = a 1-acyl-sn-glycero-3-phosphate + phosphate. The protein operates within lipid metabolism; phospholipid metabolism. In terms of biological role, catalyzes the transfer of an acyl group from acyl-phosphate (acyl-PO(4)) to glycerol-3-phosphate (G3P) to form lysophosphatidic acid (LPA). This enzyme utilizes acyl-phosphate as fatty acyl donor, but not acyl-CoA or acyl-ACP. The chain is Glycerol-3-phosphate acyltransferase from Nitratidesulfovibrio vulgaris (strain ATCC 29579 / DSM 644 / CCUG 34227 / NCIMB 8303 / VKM B-1760 / Hildenborough) (Desulfovibrio vulgaris).